The primary structure comprises 885 residues: DNA mismatch repair protein MutS (885 aa).

Residues 1 to 67 are disordered; that stretch reads MAPGEQQLSL…SNNDDEGLPR (67 aa). The span at 26–36 shows a compositional bias: basic and acidic residues; it reads SEDKTEESERP. 691 to 698 serves as a coordination point for ATP; that stretch reads GPNASGKS.

The protein belongs to the DNA mismatch repair MutS family.

Functionally, this protein is involved in the repair of mismatches in DNA. It is possible that it carries out the mismatch recognition step. This protein has a weak ATPase activity. This Synechococcus sp. (strain RCC307) protein is DNA mismatch repair protein MutS.